Here is a 200-residue protein sequence, read N- to C-terminus: Large ribosomal subunit protein uL4 (200 aa).

The segment at 42–69 (SKAQKNRSDVSGGGRKPWRQKGTGRARA) is disordered.

Belongs to the universal ribosomal protein uL4 family. Part of the 50S ribosomal subunit.

One of the primary rRNA binding proteins, this protein initially binds near the 5'-end of the 23S rRNA. It is important during the early stages of 50S assembly. It makes multiple contacts with different domains of the 23S rRNA in the assembled 50S subunit and ribosome. Its function is as follows. Forms part of the polypeptide exit tunnel. This Alcanivorax borkumensis (strain ATCC 700651 / DSM 11573 / NCIMB 13689 / SK2) protein is Large ribosomal subunit protein uL4.